The sequence spans 181 residues: Oligoribonuclease (181 aa).

The region spanning 8–171 (LIWIDMEMTG…ADIYDSIEEL (164 aa)) is the Exonuclease domain. Tyr129 is an active-site residue.

Belongs to the oligoribonuclease family.

It is found in the cytoplasm. 3'-to-5' exoribonuclease specific for small oligoribonucleotides. This Nitrosomonas eutropha (strain DSM 101675 / C91 / Nm57) protein is Oligoribonuclease.